The chain runs to 301 residues: GTPase Era (301 aa).

Positions 7-175 (YCGFIAIVGR…AAIVRKHLPE (169 aa)) constitute an Era-type G domain. Residues 15–22 (GRPNVGKS) form a G1 region. 15–22 (GRPNVGKS) provides a ligand contact to GTP. Positions 41–45 (QTTRH) are G2. The interval 62 to 65 (DTPG) is G3. GTP contacts are provided by residues 62-66 (DTPGL) and 124-127 (NKVD). Residues 124–127 (NKVD) are G4. A G5 region spans residues 154–156 (ISA). The KH type-2 domain maps to 206-283 (LGAELPYSVT…HLELWVKVKS (78 aa)).

This sequence belongs to the TRAFAC class TrmE-Era-EngA-EngB-Septin-like GTPase superfamily. Era GTPase family. In terms of assembly, monomer.

Its subcellular location is the cytoplasm. It is found in the cell inner membrane. In terms of biological role, an essential GTPase that binds both GDP and GTP, with rapid nucleotide exchange. Plays a role in 16S rRNA processing and 30S ribosomal subunit biogenesis and possibly also in cell cycle regulation and energy metabolism. This Escherichia coli O157:H7 protein is GTPase Era.